The primary structure comprises 248 residues: 3-deoxy-manno-octulosonate cytidylyltransferase (248 aa).

It belongs to the KdsB family.

It is found in the cytoplasm. The enzyme catalyses 3-deoxy-alpha-D-manno-oct-2-ulosonate + CTP = CMP-3-deoxy-beta-D-manno-octulosonate + diphosphate. Its pathway is nucleotide-sugar biosynthesis; CMP-3-deoxy-D-manno-octulosonate biosynthesis; CMP-3-deoxy-D-manno-octulosonate from 3-deoxy-D-manno-octulosonate and CTP: step 1/1. The protein operates within bacterial outer membrane biogenesis; lipopolysaccharide biosynthesis. Activates KDO (a required 8-carbon sugar) for incorporation into bacterial lipopolysaccharide in Gram-negative bacteria. The chain is 3-deoxy-manno-octulosonate cytidylyltransferase from Chlorobaculum parvum (strain DSM 263 / NCIMB 8327) (Chlorobium vibrioforme subsp. thiosulfatophilum).